A 91-amino-acid polypeptide reads, in one-letter code: MSRTIFCTFLQREADGQDFQLYPGELGKRIYNEISKEAWAQWQHKQTMLINEKKLSMMSPEHRKLLEQEMVQFLFEGKDVHIEGYTPPEKQ.

It belongs to the Fe(2+)-trafficking protein family. Monomer.

In terms of biological role, could be a mediator in iron transactions between iron acquisition and iron-requiring processes, such as synthesis and/or repair of Fe-S clusters in biosynthetic enzymes. The sequence is that of Probable Fe(2+)-trafficking protein from Klebsiella pneumoniae (strain 342).